The sequence spans 223 residues: Deoxyribose-phosphate aldolase (223 aa).

Residue D92 is the Proton donor/acceptor of the active site. K154 functions as the Schiff-base intermediate with acetaldehyde in the catalytic mechanism. K182 (proton donor/acceptor) is an active-site residue.

Belongs to the DeoC/FbaB aldolase family. DeoC type 1 subfamily.

It is found in the cytoplasm. It catalyses the reaction 2-deoxy-D-ribose 5-phosphate = D-glyceraldehyde 3-phosphate + acetaldehyde. It participates in carbohydrate degradation; 2-deoxy-D-ribose 1-phosphate degradation; D-glyceraldehyde 3-phosphate and acetaldehyde from 2-deoxy-alpha-D-ribose 1-phosphate: step 2/2. Catalyzes a reversible aldol reaction between acetaldehyde and D-glyceraldehyde 3-phosphate to generate 2-deoxy-D-ribose 5-phosphate. In Haemophilus influenzae (strain ATCC 51907 / DSM 11121 / KW20 / Rd), this protein is Deoxyribose-phosphate aldolase.